An 880-amino-acid chain; its full sequence is Interference hedgehog (880 aa).

An N-terminal signal peptide occupies residues 1-20; it reads MPSIVSSLLLVVLLTSPLGA. The Extracellular segment spans residues 21 to 703; sequence IPVLYPSPPP…SHNETFSMSP (683 aa). 4 consecutive Ig-like C2-type domains span residues 37-142, 154-235, 251-339, and 345-432; these read PGVR…TARL, PVTS…STSS, PYLL…FIQV, and PQIV…LQVT. Disulfide bonds link C60–C126, C172–C219, C275–C323, and C366–C414. N79, N102, and N208 each carry an N-linked (GlcNAc...) asparagine glycan. Residues 435–468 form a disordered region; it reads PIHSESTQQSDHNHSKANRGRRPAQMIPPSAPNV. Residues N447 and N467 are each glycosylated (N-linked (GlcNAc...) asparagine). Fibronectin type-III domains follow at residues 462 to 570 and 578 to 673; these read PPSA…LQPG and VPEM…TQRP. Positions 498, 504, 506, and 544 each coordinate heparin. N560 is a glycosylation site (N-linked (GlcNAc...) asparagine). The tract at residues 665–699 is disordered; that stretch reads LKQGRTQRPMVSTTEEATLQTGVRDTTTPSHNETF. The span at 668 to 699 shows a compositional bias: polar residues; the sequence is GRTQRPMVSTTEEATLQTGVRDTTTPSHNETF. An N-linked (GlcNAc...) asparagine glycan is attached at N696. A helical membrane pass occupies residues 704 to 724; it reads IVTGTIGGGAVLILFVVTTCL. At 725 to 880 the chain is on the cytoplasmic side; the sequence is CMWRRRNSRA…SSGSLNSVGV (156 aa). The disordered stretch occupies residues 797 to 880; the sequence is YFQRQPTYDY…SSGSLNSVGV (84 aa). Low complexity-rich tracts occupy residues 827-839 and 864-880; these read RAGSSNGNNNNLN and SSRSENLSSGSLNSVGV.

Belongs to the immunoglobulin superfamily. IHOG family. Homodimer. Heterotetramer; 2 iHog chains bind 2 hh chains when facilitated by heparin, heparin is required to promote high-affinity interactions between hh and iHog.

It is found in the membrane. In terms of biological role, mediates response to the active Hedgehog (Hh) protein signal in embryos, functioning upstream or at the level of patched (ptc). This Drosophila ananassae (Fruit fly) protein is Interference hedgehog.